The sequence spans 195 residues: uncharacterized protein (195 aa).

This is an uncharacterized protein from Acidianus hospitalis (AFV-1).